Reading from the N-terminus, the 194-residue chain is FMN-dependent NADH:quinone oxidoreductase (194 aa).

Residues Ser10, 16–18, 91–94, and 135–138 each bind FMN; these read SQS, MYNF, and TRGG.

The protein belongs to the azoreductase type 1 family. In terms of assembly, homodimer. FMN is required as a cofactor.

It catalyses the reaction 2 a quinone + NADH + H(+) = 2 a 1,4-benzosemiquinone + NAD(+). It carries out the reaction N,N-dimethyl-1,4-phenylenediamine + anthranilate + 2 NAD(+) = 2-(4-dimethylaminophenyl)diazenylbenzoate + 2 NADH + 2 H(+). In terms of biological role, quinone reductase that provides resistance to thiol-specific stress caused by electrophilic quinones. Functionally, also exhibits azoreductase activity. Catalyzes the reductive cleavage of the azo bond in aromatic azo compounds to the corresponding amines. This is FMN-dependent NADH:quinone oxidoreductase from Vibrio parahaemolyticus serotype O3:K6 (strain RIMD 2210633).